The sequence spans 262 residues: Indole-3-glycerol phosphate synthase (262 aa).

Belongs to the TrpC family.

The catalysed reaction is 1-(2-carboxyphenylamino)-1-deoxy-D-ribulose 5-phosphate + H(+) = (1S,2R)-1-C-(indol-3-yl)glycerol 3-phosphate + CO2 + H2O. It participates in amino-acid biosynthesis; L-tryptophan biosynthesis; L-tryptophan from chorismate: step 4/5. The polypeptide is Indole-3-glycerol phosphate synthase (Clostridium kluyveri (strain NBRC 12016)).